The sequence spans 849 residues: Ribosome biogenesis protein ERB1 (849 aa).

Residues 1–130 are disordered; the sequence is MARNSIKKSP…PKDDDLSRIN (130 aa). 2 stretches are compositionally biased toward acidic residues: residues 29-44 and 51-123; these read EAEE…DELN and ASDD…EPKD. Positions 286–405 are required for interaction with NOP7; that stretch reads RFVPSKHEAK…LRQVPGYQDS (120 aa). The tract at residues 405-441 is required for interaction with YTM1; the sequence is SVRERFERSLDLYLAPRVRHNKLNIDPDSLIPDLPSP. WD repeat units lie at residues 457 to 496 and 505 to 545; these read GHTG…QVYK and NNED…FDIE. Basic and acidic residues predominate over residues 569-581; sequence KISSQKEEDNKES. The disordered stretch occupies residues 569 to 619; sequence KISSQKEEDNKESDNEDEDEEEDNDDDDDDDEPETSSTVEPKKEVAKWYPP. Residues 582–602 are compositionally biased toward acidic residues; the sequence is DNEDEDEEEDNDDDDDDDEPE. WD repeat units lie at residues 633 to 675, 678 to 716, 719 to 758, 762 to 802, and 818 to 849; these read QCRK…SQSP, KSKG…LLKK, PGVR…TPYK, YHEK…DLMT, and INQI…LWTT.

This sequence belongs to the WD repeat BOP1/ERB1 family. In terms of assembly, component of the NOP7 complex, composed of ERB1, NOP7 and YTM1. The complex is held together by ERB1, which interacts with NOP7 via its N-terminal domain and with YTM1 via a high-affinity interaction between the seven-bladed beta-propeller domains of the 2 proteins. The NOP7 complex associates with the 66S pre-ribosome.

Its subcellular location is the nucleus. It is found in the nucleolus. The protein resides in the nucleoplasm. Functionally, component of the NOP7 complex, which is required for maturation of the 25S and 5.8S ribosomal RNAs and formation of the 60S ribosome. In Candida albicans (strain SC5314 / ATCC MYA-2876) (Yeast), this protein is Ribosome biogenesis protein ERB1.